The chain runs to 335 residues: MEKFKIIKTIPKICGAFIFLLFFTFLFGHYGELKTQASDEYPGNFKITSHNVYLFSRNIYPNWGQMHRADLIAQADYMKNNDVVILNEAFDTSASHRLLNNLREMYPHQTPVIGRSKHGWDKTEGNYSNFALEDGGVAVVSQWPIVEKSQHIFQRGGGADRLSNKGFAYVKIMKNGKPYHIIGTHTPADDSLISKDTSRAIRAEQMQEIQTFIAKKNIPKDEIIFIGGDLNVNYGTDEYHDMFKLLNVSSPANFNGQMATWDPTTNSMLKESYPKAAPEYLDYIFVENGHARPHSWHNKVLHTKSPQWSVKSWFKTYTYQDFSDHYPVVGFTDNN.

An N-terminal signal peptide occupies residues 1 to 28 (MEKFKIIKTIPKICGAFIFLLFFTFLFG).

Belongs to the neutral sphingomyelinase family.

The protein localises to the secreted. It carries out the reaction a sphingomyelin + H2O = phosphocholine + an N-acylsphing-4-enine + H(+). Functionally, virulence factor that promotes intracellular proliferation by mediating the disruption of the phagocytic vacuole and the release of bacteria into the host cell cytosol. May act in concert with the phospholipases PlcA and PlcB and the hemolysin hly to mediate efficient escape from the vacuole. This is Sphingomyelinase C (smcL) from Listeria ivanovii.